The following is a 417-amino-acid chain: Serine--tRNA ligase (417 aa).

Residue 226-228 (TSE) participates in L-serine binding. Residues 257-259 (RRE) and valine 273 contribute to the ATP site. Glutamate 280 is an L-serine binding site. Residue 344–347 (ELTS) coordinates ATP. Position 379 (threonine 379) interacts with L-serine.

This sequence belongs to the class-II aminoacyl-tRNA synthetase family. Type-1 seryl-tRNA synthetase subfamily. In terms of assembly, homodimer. The tRNA molecule binds across the dimer.

The protein resides in the cytoplasm. The catalysed reaction is tRNA(Ser) + L-serine + ATP = L-seryl-tRNA(Ser) + AMP + diphosphate + H(+). It catalyses the reaction tRNA(Sec) + L-serine + ATP = L-seryl-tRNA(Sec) + AMP + diphosphate + H(+). The protein operates within aminoacyl-tRNA biosynthesis; selenocysteinyl-tRNA(Sec) biosynthesis; L-seryl-tRNA(Sec) from L-serine and tRNA(Sec): step 1/1. Functionally, catalyzes the attachment of serine to tRNA(Ser). Is also able to aminoacylate tRNA(Sec) with serine, to form the misacylated tRNA L-seryl-tRNA(Sec), which will be further converted into selenocysteinyl-tRNA(Sec). This chain is Serine--tRNA ligase, found in Mycolicibacterium smegmatis (strain ATCC 700084 / mc(2)155) (Mycobacterium smegmatis).